Reading from the N-terminus, the 269-residue chain is Serine/threonine-protein kinase ZRK7 (269 aa).

Positions 80-269 (FDWSYAIGVD…KNRLMVTVIT (190 aa)) constitute a Protein kinase domain. Residues 86–94 (IGVDRFVWY) and lysine 106 contribute to the ATP site. Aspartate 205 serves as the catalytic Proton acceptor.

The protein belongs to the protein kinase superfamily. Ser/Thr protein kinase family. ZRK subfamily.

The enzyme catalyses L-seryl-[protein] + ATP = O-phospho-L-seryl-[protein] + ADP + H(+). It catalyses the reaction L-threonyl-[protein] + ATP = O-phospho-L-threonyl-[protein] + ADP + H(+). The chain is Serine/threonine-protein kinase ZRK7 from Arabidopsis thaliana (Mouse-ear cress).